Here is a 265-residue protein sequence, read N- to C-terminus: NAD kinase 1 (265 aa).

Catalysis depends on aspartate 45, which acts as the Proton acceptor. NAD(+)-binding positions include 45–46 (DG), 122–123 (NE), arginine 148, aspartate 150, and alanine 185.

Belongs to the NAD kinase family. Requires a divalent metal cation as cofactor.

Its subcellular location is the cytoplasm. The catalysed reaction is NAD(+) + ATP = ADP + NADP(+) + H(+). In terms of biological role, involved in the regulation of the intracellular balance of NAD and NADP, and is a key enzyme in the biosynthesis of NADP. Catalyzes specifically the phosphorylation on 2'-hydroxyl of the adenosine moiety of NAD to yield NADP. The protein is NAD kinase 1 of Bacillus cereus (strain ATCC 10987 / NRS 248).